We begin with the raw amino-acid sequence, 663 residues long: RING finger protein 145 (663 aa).

14 consecutive transmembrane segments (helical) span residues tyrosine 53–proline 73, leucine 77–serine 97, phenylalanine 123–threonine 143, isoleucine 146–glutamate 166, isoleucine 168–glycine 188, leucine 205–tryptophan 222, leucine 225–serine 245, tyrosine 275–cysteine 295, threonine 316–valine 336, phenylalanine 340–isoleucine 360, serine 384–phenylalanine 404, leucine 410–isoleucine 430, leucine 460–glycine 480, and tryptophan 482–alanine 502. A YLYF motif motif is present at residues tyrosine 81–phenylalanine 84. Cysteine 537 is an active-site residue. The segment at cysteine 537–histidine 575 adopts an RING-type; atypical zinc-finger fold. The tract at residues glutamate 607–alanine 663 is disordered. The segment covering glutamate 624 to alanine 663 has biased composition (basic and acidic residues).

As to quaternary structure, interacts (via YLYF motif) with INSIG1 and INSIG2.

The protein resides in the endoplasmic reticulum membrane. The enzyme catalyses S-ubiquitinyl-[E2 ubiquitin-conjugating enzyme]-L-cysteine + [acceptor protein]-L-lysine = [E2 ubiquitin-conjugating enzyme]-L-cysteine + N(6)-ubiquitinyl-[acceptor protein]-L-lysine.. Its function is as follows. E3 ubiquitin ligase that catalyzes the direct transfer of ubiquitin from E2 ubiquitin-conjugating enzyme to a specific substrate. In response to bacterial infection, negatively regulates the phagocyte oxidative burst by controlling the turnover of the NADPH oxidase complex subunits. Promotes monoubiquitination of CYBA and 'Lys-48'-linked polyubiquitination and degradation of CYBB NADPH oxidase catalytic subunits, both essential for the generation of antimicrobial reactive oxygen species. Involved in the maintenance of cholesterol homeostasis. In response to high sterol concentrations ubiquitinates HMGCR, a rate-limiting enzyme in cholesterol biosynthesis, and targets it for degradation. The interaction with INSIG1 is required for this function. In addition, triggers ubiquitination of SCAP, likely inhibiting its transport to the Golgi apparatus and the subsequent processing/maturation of SREBPF2, ultimately down-regulating cholesterol biosynthesis. In Homo sapiens (Human), this protein is RING finger protein 145.